Consider the following 328-residue polypeptide: MRPSSNVTEFVLLGLTQDPDVKKTLFVMFLLIYIVTMVGNLLIWVTTIGSPSLGSLMYFFLAYLSLMDAIYSTAMSPKLMIDLLCDKIAISLSACMGQLFIEHLLGGAEVFLLVVMAYDRYVAISKPLHYLNIMNRLVCILLLVVAMIGGFVHSVVQIVFLYSLPICGPNVIDHSVCDMYPLLELLCLDTYFIGLTVVANGGIICMVIFTFLLISCGVILNFLKTYSQEERHKALPTCISHIIVVALVFVPCIFMYVRPVSNFPFDKLMTVFYSIITLMLNPLIYSLRQSEMKNAMKNLWCEKLSIVRKRVSPTLNIFIPSSKATNRR.

At 1 to 23 (MRPSSNVTEFVLLGLTQDPDVKK) the chain is on the extracellular side. N-linked (GlcNAc...) asparagine glycosylation is present at Asn-6. The chain crosses the membrane as a helical span at residues 24–47 (TLFVMFLLIYIVTMVGNLLIWVTT). The Cytoplasmic segment spans residues 48–55 (IGSPSLGS). The helical transmembrane segment at 56-77 (LMYFFLAYLSLMDAIYSTAMSP) threads the bilayer. At 78–98 (KLMIDLLCDKIAISLSACMGQ) the chain is on the extracellular side. A disulfide bond links Cys-95 and Cys-187. Residues 99–118 (LFIEHLLGGAEVFLLVVMAY) form a helical membrane-spanning segment. Over 119 to 137 (DRYVAISKPLHYLNIMNRL) the chain is Cytoplasmic. Residues 138 to 156 (VCILLLVVAMIGGFVHSVV) form a helical membrane-spanning segment. The Extracellular segment spans residues 157–193 (QIVFLYSLPICGPNVIDHSVCDMYPLLELLCLDTYFI). Residues 194-217 (GLTVVANGGIICMVIFTFLLISCG) traverse the membrane as a helical segment. The Cytoplasmic segment spans residues 218–233 (VILNFLKTYSQEERHK). Residues 234–256 (ALPTCISHIIVVALVFVPCIFMY) form a helical membrane-spanning segment. Over 257–267 (VRPVSNFPFDK) the chain is Extracellular. Residues 268 to 287 (LMTVFYSIITLMLNPLIYSL) form a helical membrane-spanning segment. At 288–328 (RQSEMKNAMKNLWCEKLSIVRKRVSPTLNIFIPSSKATNRR) the chain is on the cytoplasmic side.

Belongs to the G-protein coupled receptor 1 family.

The protein resides in the cell membrane. Its function is as follows. Odorant receptor. This is Olfactory receptor 4A16 (OR4A16) from Homo sapiens (Human).